We begin with the raw amino-acid sequence, 200 residues long: N-(5'-phosphoribosyl)anthranilate isomerase (200 aa).

Belongs to the TrpF family.

It carries out the reaction N-(5-phospho-beta-D-ribosyl)anthranilate = 1-(2-carboxyphenylamino)-1-deoxy-D-ribulose 5-phosphate. It functions in the pathway amino-acid biosynthesis; L-tryptophan biosynthesis; L-tryptophan from chorismate: step 3/5. In Endomicrobium trichonymphae, this protein is N-(5'-phosphoribosyl)anthranilate isomerase.